A 470-amino-acid chain; its full sequence is 6-phospho-beta-galactosidase (470 aa).

D-galactose 6-phosphate-binding residues include glutamine 19, histidine 116, asparagine 159, glutamate 160, and asparagine 297. Glutamate 160 (proton donor) is an active-site residue. The active-site Nucleophile is glutamate 375. 4 residues coordinate D-galactose 6-phosphate: serine 430, tryptophan 431, lysine 437, and tyrosine 439.

Belongs to the glycosyl hydrolase 1 family.

The catalysed reaction is a 6-phospho-beta-D-galactoside + H2O = D-galactose 6-phosphate + an alcohol. The protein operates within carbohydrate metabolism; lactose degradation; D-galactose 6-phosphate and beta-D-glucose from lactose 6-phosphate: step 1/1. This is 6-phospho-beta-galactosidase from Staphylococcus aureus (strain USA300).